The sequence spans 176 residues: MKIQDYTKQMVDEKSFIDMAYTLLNDKGETMNLYDIIDEFRALGDYEYEEIENRVVQFYTDLNTDGRFLNVGENLWGLRDWYSVDDIEEKIAPTIQKFDILDADDEEDQNLKLLGEDEMDDDDDIPAQTDDQEELNDPEDEQVEEEINHSDIVIEEDEDELDEDEEVFEDEEDFND.

The HTH HARE-type domain maps to Lys-14–Trp-81. The tract at residues Leu-114 to Asp-176 is disordered. 2 stretches are compositionally biased toward acidic residues: residues Glu-116 to Glu-145 and Val-153 to Asp-176.

It belongs to the RpoE family. RNAP is composed of a core of 2 alpha, a beta and a beta' subunits. The core is associated with a delta subunit and one of several sigma factors.

Participates in both the initiation and recycling phases of transcription. In the presence of the delta subunit, RNAP displays an increased specificity of transcription, a decreased affinity for nucleic acids, and an increased efficiency of RNA synthesis because of enhanced recycling. The sequence is that of Probable DNA-directed RNA polymerase subunit delta from Staphylococcus aureus (strain JH1).